The chain runs to 550 residues: PAB1-binding protein 1 (550 aa).

The 85-residue stretch at 11–95 (RLEYLYLNLV…IVMIEVQNAK (85 aa)) folds into the Sm domain. Disordered stretches follow at residues 201–296 (HDDE…HKRM) and 441–550 (GMGN…RVGK). Basic and acidic residues predominate over residues 214-223 (DVHRPQEKKP). A compositionally biased stretch (low complexity) spans 244-262 (AAAAPATAPTTAPAAAPAP). A compositionally biased stretch (pro residues) spans 263–281 (AAAPPAAAPAAAAPPPPPA).

This sequence belongs to the ataxin-2 family. As to quaternary structure, forms a complex composed of at least MKT1, PBP1, XAC1 and LSM12. Forms a complex composed of at least MKT1L, PBP1, XAC1 and LSM12. Within the complex, interacts with MKT1 (via C-terminus); the interaction is direct. Interacts (via C-terminus) with ZC3H11; the interaction is direct.

It is found in the cytoplasm. The protein localises to the cytosol. The protein resides in the stress granule. Its function is as follows. Involved in post-transcriptional regulation of gene expression. Promotes mRNA stabilization by bridging poly(A)-binding protein to mRNAs. The protein is PAB1-binding protein 1 of Trypanosoma brucei brucei (strain 927/4 GUTat10.1).